Here is a 261-residue protein sequence, read N- to C-terminus: Cytochrome c oxidase subunit 3 (261 aa).

Over 1–15 the chain is Mitochondrial matrix; sequence MTHQTHAYHMVNPSP. A helical transmembrane segment spans residues 16 to 34; it reads WPLTGALSALLMTSGLTMW. Over 35–40 the chain is Mitochondrial intermembrane; the sequence is FHYNST. Residues 41–66 traverse the membrane as a helical segment; it reads ILLMLGLTTNMLTMYQWWRDIIREST. Topologically, residues 67 to 72 are mitochondrial matrix; sequence FQGHHT. Residues 73–105 form a helical membrane-spanning segment; that stretch reads PTVQKGLRYGMILFIISEVLFFTGFFWAFYHSS. Residues 106-128 lie on the Mitochondrial intermembrane side of the membrane; the sequence is LAPTPELGGCWPPTGIHPLNPLE. Residues 129–152 traverse the membrane as a helical segment; it reads VPLLNTSVLLASGVSITWAHHSLM. Residues 153–155 are Mitochondrial matrix-facing; sequence EGD. The chain crosses the membrane as a helical span at residues 156–183; sequence RNHMLQALFITIALGIYFTLLQASEYYE. Topologically, residues 184-190 are mitochondrial intermembrane; it reads APFTISD. The chain crosses the membrane as a helical span at residues 191–223; sequence GVYGSTFFVATGFHGLHVIIGSTFLIVCFFRQL. The Mitochondrial matrix segment spans residues 224–232; sequence KFHFTSSHH. The chain crosses the membrane as a helical span at residues 233–256; sequence FGFEAAAWYWHFVDVVWLFLYVSI. At 257–261 the chain is on the mitochondrial intermembrane side; the sequence is YWWGS.

The protein belongs to the cytochrome c oxidase subunit 3 family. In terms of assembly, component of the cytochrome c oxidase (complex IV, CIV), a multisubunit enzyme composed of 14 subunits. The complex is composed of a catalytic core of 3 subunits MT-CO1, MT-CO2 and MT-CO3, encoded in the mitochondrial DNA, and 11 supernumerary subunits COX4I, COX5A, COX5B, COX6A, COX6B, COX6C, COX7A, COX7B, COX7C, COX8 and NDUFA4, which are encoded in the nuclear genome. The complex exists as a monomer or a dimer and forms supercomplexes (SCs) in the inner mitochondrial membrane with NADH-ubiquinone oxidoreductase (complex I, CI) and ubiquinol-cytochrome c oxidoreductase (cytochrome b-c1 complex, complex III, CIII), resulting in different assemblies (supercomplex SCI(1)III(2)IV(1) and megacomplex MCI(2)III(2)IV(2)).

The protein resides in the mitochondrion inner membrane. The catalysed reaction is 4 Fe(II)-[cytochrome c] + O2 + 8 H(+)(in) = 4 Fe(III)-[cytochrome c] + 2 H2O + 4 H(+)(out). Functionally, component of the cytochrome c oxidase, the last enzyme in the mitochondrial electron transport chain which drives oxidative phosphorylation. The respiratory chain contains 3 multisubunit complexes succinate dehydrogenase (complex II, CII), ubiquinol-cytochrome c oxidoreductase (cytochrome b-c1 complex, complex III, CIII) and cytochrome c oxidase (complex IV, CIV), that cooperate to transfer electrons derived from NADH and succinate to molecular oxygen, creating an electrochemical gradient over the inner membrane that drives transmembrane transport and the ATP synthase. Cytochrome c oxidase is the component of the respiratory chain that catalyzes the reduction of oxygen to water. Electrons originating from reduced cytochrome c in the intermembrane space (IMS) are transferred via the dinuclear copper A center (CU(A)) of subunit 2 and heme A of subunit 1 to the active site in subunit 1, a binuclear center (BNC) formed by heme A3 and copper B (CU(B)). The BNC reduces molecular oxygen to 2 water molecules using 4 electrons from cytochrome c in the IMS and 4 protons from the mitochondrial matrix. This is Cytochrome c oxidase subunit 3 (MT-CO3) from Tragelaphus imberbis (Lesser kudu).